The following is a 264-amino-acid chain: Glutamate racemase 2 (264 aa).

Substrate contacts are provided by residues 10–11 (DS) and 42–43 (YG). Cys-73 serves as the catalytic Proton donor/acceptor. A substrate-binding site is contributed by 74–75 (NT). Cys-181 functions as the Proton donor/acceptor in the catalytic mechanism. 182-183 (TH) contacts substrate.

The protein belongs to the aspartate/glutamate racemases family.

It catalyses the reaction L-glutamate = D-glutamate. It functions in the pathway cell wall biogenesis; peptidoglycan biosynthesis. Its function is as follows. Provides the (R)-glutamate required for cell wall biosynthesis. The polypeptide is Glutamate racemase 2 (Caldanaerobacter subterraneus subsp. tengcongensis (strain DSM 15242 / JCM 11007 / NBRC 100824 / MB4) (Thermoanaerobacter tengcongensis)).